A 407-amino-acid polypeptide reads, in one-letter code: 4-hydroxy-3-methylbut-2-en-1-yl diphosphate synthase (ferredoxin) (407 aa).

[4Fe-4S] cluster is bound by residues C316, C319, C350, and E357.

This sequence belongs to the IspG family. It depends on [4Fe-4S] cluster as a cofactor.

The catalysed reaction is (2E)-4-hydroxy-3-methylbut-2-enyl diphosphate + 2 oxidized [2Fe-2S]-[ferredoxin] + H2O = 2-C-methyl-D-erythritol 2,4-cyclic diphosphate + 2 reduced [2Fe-2S]-[ferredoxin] + H(+). Its pathway is isoprenoid biosynthesis; isopentenyl diphosphate biosynthesis via DXP pathway; isopentenyl diphosphate from 1-deoxy-D-xylulose 5-phosphate: step 5/6. In terms of biological role, converts 2C-methyl-D-erythritol 2,4-cyclodiphosphate (ME-2,4cPP) into 1-hydroxy-2-methyl-2-(E)-butenyl 4-diphosphate. The polypeptide is 4-hydroxy-3-methylbut-2-en-1-yl diphosphate synthase (ferredoxin) (Cyanothece sp. (strain PCC 7425 / ATCC 29141)).